Here is a 465-residue protein sequence, read N- to C-terminus: Cysteine--tRNA ligase (465 aa).

C27 serves as a coordination point for Zn(2+). The 'HIGH' region signature appears at 29 to 39; it reads PTVYDDAHLGH. Zn(2+) is bound by residues C207, H237, and E241. Positions 269-273 match the 'KMSKS' region motif; it reads KMSKS. K272 is an ATP binding site.

It belongs to the class-I aminoacyl-tRNA synthetase family. As to quaternary structure, monomer. Zn(2+) is required as a cofactor.

The protein resides in the cytoplasm. It catalyses the reaction tRNA(Cys) + L-cysteine + ATP = L-cysteinyl-tRNA(Cys) + AMP + diphosphate. This is Cysteine--tRNA ligase from Helicobacter pylori (strain G27).